The sequence spans 63 residues: NSVNPCCDPQTCKPIEGKHCISGPCCENCYFLRSGTICQRARGDGNNDYCTGITPDCPRNRYN.

In terms of domain architecture, Disintegrin spans 1 to 63 (NSVNPCCDPQ…TPDCPRNRYN (63 aa)). 4 disulfide bridges follow: cysteine 6–cysteine 29, cysteine 20–cysteine 26, cysteine 25–cysteine 50, and cysteine 38–cysteine 57. Residues 42–44 (RGD) carry the Cell attachment site motif.

The protein belongs to the disintegrin family. Dimeric disintegrin subfamily. Heterodimer with subunit A; disulfide-linked. As to expression, expressed by the venom gland.

It localises to the secreted. Its function is as follows. May bind to both alpha-IIb/beta-3 (ITGA2B/ITGB3) and alpha-V/beta-3 (ITGAV/ITGB3) integrins, and may inhibit platelet aggregation. This is Disintegrin schistatin-like subunit B from Echis carinatus (Saw-scaled viper).